Here is a 629-residue protein sequence, read N- to C-terminus: Coiled-coil domain-containing protein 93 (629 aa).

The interval 1 to 23 (MGLPKGPEGQGLPEVETREDEEQ) is disordered. Positions 1–428 (MGLPKGPEGQ…ETLKAERAPG (428 aa)) are sufficient for interaction with CCDC22. Coiled coils occupy residues 231–430 (LSAA…PGEK) and 558–599 (LRQM…LLEK). A phosphoserine mark is found at serine 298, serine 301, and serine 305. The tract at residues 446-629 (THNEDLDRRY…LLSKIKAKAS (184 aa)) is sufficient for interaction with WASHC2C.

It belongs to the CCDC93 family. Component of the commander complex consisting of the CCC subcomplex and the retriever subcomplex. Component of the CCC (COMMD/CCDC22/CCDC93) subcomplex consisting of COMMD1, COMMD2, COMMD3, COMMD4, COMMD5, COMMD6, COMMD7, COMMD8, COMMD9, COMMD10, CCDC22 and CCDC93. Forms a coiled-coil heterodimer with CCDC22; this heterodimer interacts with the guanine nucleotide exchange factor DENND10; the interaction is direct. Interacts with WASHC1. Interacts directly with WASHC2C. Interacts with SNX17 and SNX31.

Its subcellular location is the early endosome. Component of the commander complex that is essential for endosomal recycling of transmembrane cargos; the commander complex is composed of composed of the CCC subcomplex and the retriever subcomplex. Component of the CCC complex, which is involved in the regulation of endosomal recycling of surface proteins, including integrins, signaling receptor and channels. The CCC complex associates with SNX17, retriever and WASH complexes to prevent lysosomal degradation and promote cell surface recycling of numerous cargos such as integrins ITGA5:ITGB1. Involved in copper-dependent ATP7A trafficking between the trans-Golgi network and vesicles in the cell periphery; the function is proposed to depend on its association within the CCC complex and cooperation with the WASH complex on early endosomes and is dependent on its interaction with WASHC2C. This Mus musculus (Mouse) protein is Coiled-coil domain-containing protein 93 (Ccdc93).